The primary structure comprises 1379 residues: DNA-directed RNA polymerase subunit beta (1379 aa).

The protein belongs to the RNA polymerase beta chain family. The RNAP catalytic core consists of 2 alpha, 1 beta, 1 beta' and 1 omega subunit. When a sigma factor is associated with the core the holoenzyme is formed, which can initiate transcription.

The enzyme catalyses RNA(n) + a ribonucleoside 5'-triphosphate = RNA(n+1) + diphosphate. In terms of biological role, DNA-dependent RNA polymerase catalyzes the transcription of DNA into RNA using the four ribonucleoside triphosphates as substrates. This chain is DNA-directed RNA polymerase subunit beta, found in Ruegeria sp. (strain TM1040) (Silicibacter sp.).